A 186-amino-acid polypeptide reads, in one-letter code: Signal peptidase I (186 aa).

Residues 1-19 (MTEEKSTNKKNSLFEWVKA) lie on the Cytoplasmic side of the membrane. A helical membrane pass occupies residues 20–40 (IIIAVVLALLIRAFLFEPYLV). The Extracellular segment spans residues 41-186 (EGTSMDPTLH…FPFNEIRKTD (146 aa)). Active-site residues include Ser44 and Lys86.

The protein belongs to the peptidase S26 family.

It is found in the cell membrane. It carries out the reaction Cleavage of hydrophobic, N-terminal signal or leader sequences from secreted and periplasmic proteins.. This is Signal peptidase I (lepB) from Bacillus licheniformis.